Consider the following 855-residue polypeptide: DNA mismatch repair protein MutS (855 aa).

Position 616-623 (616-623 (GPNMGGKS)) interacts with ATP.

It belongs to the DNA mismatch repair MutS family.

Its function is as follows. This protein is involved in the repair of mismatches in DNA. It is possible that it carries out the mismatch recognition step. This protein has a weak ATPase activity. The protein is DNA mismatch repair protein MutS of Salmonella gallinarum (strain 287/91 / NCTC 13346).